Reading from the N-terminus, the 259-residue chain is Imidazole glycerol phosphate synthase subunit HisF (259 aa).

Residues D11 and D130 contribute to the active site.

It belongs to the HisA/HisF family. As to quaternary structure, heterodimer of HisH and HisF.

The protein localises to the cytoplasm. The enzyme catalyses 5-[(5-phospho-1-deoxy-D-ribulos-1-ylimino)methylamino]-1-(5-phospho-beta-D-ribosyl)imidazole-4-carboxamide + L-glutamine = D-erythro-1-(imidazol-4-yl)glycerol 3-phosphate + 5-amino-1-(5-phospho-beta-D-ribosyl)imidazole-4-carboxamide + L-glutamate + H(+). It functions in the pathway amino-acid biosynthesis; L-histidine biosynthesis; L-histidine from 5-phospho-alpha-D-ribose 1-diphosphate: step 5/9. Functionally, IGPS catalyzes the conversion of PRFAR and glutamine to IGP, AICAR and glutamate. The HisF subunit catalyzes the cyclization activity that produces IGP and AICAR from PRFAR using the ammonia provided by the HisH subunit. This chain is Imidazole glycerol phosphate synthase subunit HisF, found in Desulfosudis oleivorans (strain DSM 6200 / JCM 39069 / Hxd3) (Desulfococcus oleovorans).